Reading from the N-terminus, the 233-residue chain is MVSSSLTKLVFFGCLLLLTFTDNLVAGKSGKVKLNLYYESLCPGCQEFIVDDLGKIFDYDLYTITDLKLFPFGNAELSDNLTVTCQHGEEECKLNALEACALRTWPDQKSQYSFIRCVESDTKGWESCVKNSGREKAINDCYNGDLSRKLILGYATKTKNLKPPHEYVPWVTLNGKPLDDSVQSTDDLVAQICNAYKGKTTLPKVCNSSASMSKSPERKWKLQVSYANKATNY.

An N-terminal signal peptide occupies residues 1–26 (MVSSSLTKLVFFGCLLLLTFTDNLVA). An intrachain disulfide couples C42 to C45. N-linked (GlcNAc...) asparagine glycans are attached at residues N80 and N207. The propeptide at 200–233 (TTLPKVCNSSASMSKSPERKWKLQVSYANKATNY) is removed in mature form.

It belongs to the GILT family. Dimer; disulfide-linked. In terms of tissue distribution, expressed in the outer integument of seed coat.

The protein localises to the secreted. The protein resides in the lysosome. Lysosomal thiol reductase that can reduce protein disulfide bonds. May facilitate the complete unfolding of proteins destined for lysosomal degradation. This chain is Gamma-interferon-responsive lysosomal thiol protein, found in Arabidopsis thaliana (Mouse-ear cress).